The following is a 79-amino-acid chain: MAKSFFAAFLIIMLISSLVDGKSTVGQKLKKKLNQAVDKVKEVLNKSEYMCPVVSSFCKQHCARLGKSGQCDLLECICS.

Positions 1–21 (MAKSFFAAFLIIMLISSLVDG) are cleaved as a signal peptide. Positions 48–79 (EYMCPVVSSFCKQHCARLGKSGQCDLLECICS) constitute a BetaSPN-type CS-alpha/beta domain. Cystine bridges form between cysteine 51–cysteine 71, cysteine 58–cysteine 76, and cysteine 62–cysteine 78.

As to expression, expressed by the venom gland.

Its subcellular location is the secreted. In terms of biological role, the full peptide presents antibacterial and cytotoxic activities. The synthetic C-terminus (AA 33-76) inhibits voltage-gated potassium channels Kv1.1/KCNA1, Kv1.2/KCNA2, and Kv1.3/KCNA3. This is Potassium channel toxin Hge-beta-KTx from Hoffmannihadrurus gertschi (Scorpion).